We begin with the raw amino-acid sequence, 122 residues long: Large ribosomal subunit protein uL14 (122 aa).

Belongs to the universal ribosomal protein uL14 family. As to quaternary structure, part of the 50S ribosomal subunit. Forms a cluster with proteins L3 and L19. In the 70S ribosome, L14 and L19 interact and together make contacts with the 16S rRNA in bridges B5 and B8.

Binds to 23S rRNA. Forms part of two intersubunit bridges in the 70S ribosome. This is Large ribosomal subunit protein uL14 from Spiroplasma citri.